The chain runs to 257 residues: NAD-capped RNA hydrolase NudC (257 aa).

Residues K25 and R69 each contribute to the substrate site. 2 residues coordinate Zn(2+): C98 and C101. A substrate-binding site is contributed by E111. Residues C116 and C119 each coordinate Zn(2+). Residue Y124 coordinates substrate. The 124-residue stretch at 125 to 248 folds into the Nudix hydrolase domain; that stretch reads PQIAPCIIVA…TVARRLIEDT (124 aa). Residues A158, E174, and E178 each contribute to the a divalent metal cation site. Positions 159–180 match the Nudix box motif; it reads GFVEVGETLEQAVAREVMEESG. 192–199 contacts substrate; that stretch reads QPWPFPQS. E219 contributes to the a divalent metal cation binding site. Residue A241 coordinates substrate.

Belongs to the Nudix hydrolase family. NudC subfamily. In terms of assembly, homodimer. Mg(2+) serves as cofactor. It depends on Mn(2+) as a cofactor. Zn(2+) is required as a cofactor.

The enzyme catalyses a 5'-end NAD(+)-phospho-ribonucleoside in mRNA + H2O = a 5'-end phospho-adenosine-phospho-ribonucleoside in mRNA + beta-nicotinamide D-ribonucleotide + 2 H(+). The catalysed reaction is NAD(+) + H2O = beta-nicotinamide D-ribonucleotide + AMP + 2 H(+). It catalyses the reaction NADH + H2O = reduced beta-nicotinamide D-ribonucleotide + AMP + 2 H(+). Its function is as follows. mRNA decapping enzyme that specifically removes the nicotinamide adenine dinucleotide (NAD) cap from a subset of mRNAs by hydrolyzing the diphosphate linkage to produce nicotinamide mononucleotide (NMN) and 5' monophosphate mRNA. The NAD-cap is present at the 5'-end of some mRNAs and stabilizes RNA against 5'-processing. Has preference for mRNAs with a 5'-end purine. Catalyzes the hydrolysis of a broad range of dinucleotide pyrophosphates. The sequence is that of NAD-capped RNA hydrolase NudC from Escherichia coli O127:H6 (strain E2348/69 / EPEC).